The chain runs to 410 residues: LanC-like protein GCR2 (410 aa).

3 residues coordinate Zn(2+): cysteine 283, cysteine 328, and histidine 329.

The protein belongs to the LanC-like protein family. As to quaternary structure, may interact (via C-terminus) with GPA1.

May play a role in abscisic acid (ABA) signaling. The chain is LanC-like protein GCR2 (GCR2) from Arabidopsis thaliana (Mouse-ear cress).